A 482-amino-acid polypeptide reads, in one-letter code: Aspartyl/glutamyl-tRNA(Asn/Gln) amidotransferase subunit B (482 aa).

The protein belongs to the GatB/GatE family. GatB subfamily. Heterotrimer of A, B and C subunits.

It carries out the reaction L-glutamyl-tRNA(Gln) + L-glutamine + ATP + H2O = L-glutaminyl-tRNA(Gln) + L-glutamate + ADP + phosphate + H(+). The enzyme catalyses L-aspartyl-tRNA(Asn) + L-glutamine + ATP + H2O = L-asparaginyl-tRNA(Asn) + L-glutamate + ADP + phosphate + 2 H(+). Its function is as follows. Allows the formation of correctly charged Asn-tRNA(Asn) or Gln-tRNA(Gln) through the transamidation of misacylated Asp-tRNA(Asn) or Glu-tRNA(Gln) in organisms which lack either or both of asparaginyl-tRNA or glutaminyl-tRNA synthetases. The reaction takes place in the presence of glutamine and ATP through an activated phospho-Asp-tRNA(Asn) or phospho-Glu-tRNA(Gln). The protein is Aspartyl/glutamyl-tRNA(Asn/Gln) amidotransferase subunit B of Ehrlichia canis (strain Jake).